The sequence spans 78 residues: Delta-conotoxin-like CVIE (78 aa).

Positions 1-22 (MKLTCMMIVAVLFLTAWTFVTA) are cleaved as a signal peptide. A propeptide spanning residues 23 to 49 (DDSRNGLKNLFPKARHEMKNPEASKLN) is cleaved from the precursor. 3 disulfides stabilise this stretch: Cys-54–Cys-69, Cys-61–Cys-73, and Cys-68–Cys-77. A 4-hydroxyproline modification is found at Pro-65.

Belongs to the conotoxin O1 superfamily. Expressed by the venom duct.

The protein resides in the secreted. Its function is as follows. Delta-conotoxins bind to site 6 of voltage-gated sodium channels (Nav) and inhibit the inactivation process. The sequence is that of Delta-conotoxin-like CVIE from Conus catus (Cat cone).